The primary structure comprises 109 residues: Spermidine export protein MdtI (109 aa).

4 helical membrane-spanning segments follow: residues 6–26, 36–56, 64–84, and 88–108; these read WVHAAWLALAIVLEIVANVFL, IFGLLSQAAVLAAFSALSQAV, AYALWGGFGIAATLAAGWILF, and LNRKGWIGLVLLLAGMIMVKL.

The protein belongs to the drug/metabolite transporter (DMT) superfamily. Small multidrug resistance (SMR) (TC 2.A.7.1) family. MdtI subfamily. In terms of assembly, forms a complex with MdtJ.

It is found in the cell inner membrane. Functionally, catalyzes the excretion of spermidine. In Shigella dysenteriae serotype 1 (strain Sd197), this protein is Spermidine export protein MdtI.